The following is a 382-amino-acid chain: D-galactonate dehydratase (382 aa).

Mg(2+) is bound at residue D183. H185 serves as the catalytic Proton donor. The Mg(2+) site is built by E209 and E235. The Proton acceptor role is filled by H285.

This sequence belongs to the mandelate racemase/muconate lactonizing enzyme family. GalD subfamily. Requires Mg(2+) as cofactor.

It catalyses the reaction D-galactonate = 2-dehydro-3-deoxy-D-galactonate + H2O. It participates in carbohydrate acid metabolism; D-galactonate degradation; D-glyceraldehyde 3-phosphate and pyruvate from D-galactonate: step 1/3. Functionally, catalyzes the dehydration of D-galactonate to 2-keto-3-deoxy-D-galactonate. This is D-galactonate dehydratase from Salmonella paratyphi A (strain AKU_12601).